A 337-amino-acid polypeptide reads, in one-letter code: Biotin synthase (337 aa).

The region spanning 58-288 (AGSELLHACS…AHPHKIIKFA (231 aa)) is the Radical SAM core domain. The [4Fe-4S] cluster site is built by Cys-76, Cys-80, and Cys-83. Positions 155, 216, and 286 each coordinate [2Fe-2S] cluster.

It belongs to the radical SAM superfamily. Biotin synthase family. Homodimer. It depends on [4Fe-4S] cluster as a cofactor. The cofactor is [2Fe-2S] cluster.

It carries out the reaction (4R,5S)-dethiobiotin + (sulfur carrier)-SH + 2 reduced [2Fe-2S]-[ferredoxin] + 2 S-adenosyl-L-methionine = (sulfur carrier)-H + biotin + 2 5'-deoxyadenosine + 2 L-methionine + 2 oxidized [2Fe-2S]-[ferredoxin]. It participates in cofactor biosynthesis; biotin biosynthesis; biotin from 7,8-diaminononanoate: step 2/2. Functionally, catalyzes the conversion of dethiobiotin (DTB) to biotin by the insertion of a sulfur atom into dethiobiotin via a radical-based mechanism. This Pelodictyon phaeoclathratiforme (strain DSM 5477 / BU-1) protein is Biotin synthase.